Consider the following 507-residue polypeptide: ATP synthase subunit alpha, mitochondrial (507 aa).

171-178 lines the ATP pocket; the sequence is GDRQTGKT.

This sequence belongs to the ATPase alpha/beta chains family. As to quaternary structure, F-type ATPases have 2 components, CF(1) - the catalytic core - and CF(0) - the membrane proton channel. CF(1) has five subunits: alpha(3), beta(3), gamma(1), delta(1), epsilon(1). CF(0) has three main subunits: a, b and c.

It is found in the mitochondrion. The protein localises to the mitochondrion inner membrane. Functionally, mitochondrial membrane ATP synthase (F(1)F(0) ATP synthase or Complex V) produces ATP from ADP in the presence of a proton gradient across the membrane which is generated by electron transport complexes of the respiratory chain. F-type ATPases consist of two structural domains, F(1) - containing the extramembraneous catalytic core, and F(0) - containing the membrane proton channel, linked together by a central stalk and a peripheral stalk. During catalysis, ATP synthesis in the catalytic domain of F(1) is coupled via a rotary mechanism of the central stalk subunits to proton translocation. Subunits alpha and beta form the catalytic core in F(1). Rotation of the central stalk against the surrounding alpha(3)beta(3) subunits leads to hydrolysis of ATP in three separate catalytic sites on the beta subunits. Subunit alpha does not bear the catalytic high-affinity ATP-binding sites. This Raphanus sativus (Radish) protein is ATP synthase subunit alpha, mitochondrial (ATPA).